The sequence spans 113 residues: Hydrogenase maturation factor HypA (113 aa).

Ni(2+) is bound at residue histidine 2. Zn(2+)-binding residues include cysteine 73, cysteine 76, cysteine 89, and cysteine 92.

It belongs to the HypA/HybF family.

Functionally, involved in the maturation of [NiFe] hydrogenases. Required for nickel insertion into the metal center of the hydrogenase. The polypeptide is Hydrogenase maturation factor HypA (Azotobacter chroococcum mcd 1).